The chain runs to 94 residues: Antifungal protein (94 aa).

Positions 1 to 21 are cleaved as a signal peptide; it reads MKFVSLASLGFALVAALGAVA. The propeptide occupies 22-43; that stretch reads TPVEADSLTAGGLDARDESAVL. Disulfide bonds link cysteine 50-cysteine 76, cysteine 57-cysteine 83, cysteine 69-cysteine 71, and cysteine 92-cysteine 94.

The protein belongs to the antifungal protein pafB family.

The protein localises to the secreted. Its subcellular location is the host cytoplasm. In terms of biological role, antifungal protein that acts as an inhibitor of growth of a variety of fungal species. The chain is Antifungal protein (afp) from Aspergillus giganteus.